A 1210-amino-acid chain; its full sequence is ATP-dependent helicase/nuclease subunit A (1210 aa).

A UvrD-like helicase ATP-binding domain is found at 27–483; sequence QKRTAQQIEA…ILLKENFRSQ (457 aa). 48–55 is a binding site for ATP; the sequence is ASAGSGKT. The UvrD-like helicase C-terminal domain maps to 512–798; that stretch reads QLIAGSHAQT…NLMTIHKSKG (287 aa).

The protein belongs to the helicase family. AddA subfamily. As to quaternary structure, heterodimer of AddA and AddB/RexB. Mg(2+) serves as cofactor.

The enzyme catalyses Couples ATP hydrolysis with the unwinding of duplex DNA by translocating in the 3'-5' direction.. It catalyses the reaction ATP + H2O = ADP + phosphate + H(+). In terms of biological role, the heterodimer acts as both an ATP-dependent DNA helicase and an ATP-dependent, dual-direction single-stranded exonuclease. Recognizes the chi site generating a DNA molecule suitable for the initiation of homologous recombination. The AddA nuclease domain is required for chi fragment generation; this subunit has the helicase and 3' -&gt; 5' nuclease activities. This chain is ATP-dependent helicase/nuclease subunit A, found in Streptococcus pyogenes serotype M5 (strain Manfredo).